A 248-amino-acid chain; its full sequence is MEGVEEKKKEVPAVPETLKKKRRNFAELKIKRLRKKFAQKMLRKARRKLIYEKAKHYHKEYRQMYRTEIRMARMARKAGNFYVPAEPKLAFVIRIRGINGVSPKVRKVLQLLRLRQIFNGTFVKLNKASINMLRIVEPYIAWGYPNLKSVNELIYKRGYGKINKKRIALTDNALIARSLGKYGIICMEDLIHEIYTVGKRFKEANNFLWPFKLSSPRGGMKKKTTHFVEGGDAGNREDQINRLIRRMN.

Residue methionine 1 is modified to N-acetylmethionine. A run of 4 repeats spans residues 7–18 (KKKEVPAVPETL), 19–30 (KKKRRNFAELKI), 31–42 (KRLRKKFAQKML), and 43–54 (RKARRKLIYEKA). The interval 7 to 54 (KKKEVPAVPETLKKKRRNFAELKIKRLRKKFAQKMLRKARRKLIYEKA) is 4 X 12 AA tandem repeats. Phosphothreonine is present on threonine 17. Position 124 is an N6-acetyllysine (lysine 124). The residue at position 127 (lysine 127) is an N6-succinyllysine. Phosphotyrosine is present on tyrosine 139.

The protein belongs to the universal ribosomal protein uL30 family. As to quaternary structure, component of the large ribosomal subunit. Homodimer. Interacts with DHX33.

Its subcellular location is the cytoplasm. Functionally, component of the large ribosomal subunit. The ribosome is a large ribonucleoprotein complex responsible for the synthesis of proteins in the cell. Binds to G-rich structures in 28S rRNA and in mRNAs. Plays a regulatory role in the translation apparatus; inhibits cell-free translation of mRNAs. This chain is Large ribosomal subunit protein uL30 (RPL7), found in Homo sapiens (Human).